Reading from the N-terminus, the 313-residue chain is 3-O-acetylpapaveroxine carboxylesterase CXE2 (313 aa).

The short motif at 72–74 is the Involved in the stabilization of the negatively charged intermediate by the formation of the oxyanion hole element; that stretch reads HGG. Residues Ser-158, Asp-262, and His-292 contribute to the active site.

Belongs to the 'GDXG' lipolytic enzyme family.

The enzyme catalyses 3-O-acetylpapaveroxine + H2O = narcotine hemiacetal + acetate + H(+). Its pathway is alkaloid biosynthesis. In terms of biological role, carboxylesterase involved in the biosynthesis of the benzylisoquinoline alkaloid noscapine. Converts 3-O-acetylpapaveroxine to narcotine hemiacetal. The polypeptide is 3-O-acetylpapaveroxine carboxylesterase CXE2 (Papaver somniferum (Opium poppy)).